The sequence spans 647 residues: Sodium/nucleoside cotransporter 1 (647 aa).

Over 1–79 (MEDNTPRQRD…VRRFCREHTQ (79 aa)) the chain is Cytoplasmic. The segment at 34 to 58 (EGRAPGSDSSPAEVGGGWSKAGPEH) is disordered. A helical transmembrane segment spans residues 80–103 (LFRWICTGLLCTAFAAFLLIACLL). The Extracellular segment spans residues 104-108 (DFQRA). A helical transmembrane segment spans residues 109 to 127 (LALFVLFCVVLFFLAHSLL). Over 128-146 (KRLLGPKLLRCVKPLRHPC) the chain is Cytoplasmic. A helical transmembrane segment spans residues 147-166 (LNLWFKRGLALAAFLGLVLW). Residues 167-177 (LVLDTAQRPEQ) lie on the Extracellular side of the membrane. The helical transmembrane segment at 178-194 (LVSFGGICVFILLLFAG) threads the bilayer. Residues 195–200 (SKHHRA) are Cytoplasmic-facing. The helical transmembrane segment at 201 to 221 (VSWRAVSWGLGLQFALGLFVI) threads the bilayer. The Extracellular segment spans residues 222 to 260 (RTEPGFIAFQWLGDQIQIFLSYTEAGSSFVFGEALVKDV). A helical transmembrane segment spans residues 261 to 282 (FAFQVLPIIVFFSCAMSVLYYV). The Cytoplasmic segment spans residues 283–293 (GLMQWVILKIS). A helical transmembrane segment spans residues 294 to 317 (WLMQATMGTTATETLSVAGNIFVS). Topologically, residues 318–336 (QTEAPLLIRPYLADMTLSE) are extracellular. A helical membrane pass occupies residues 337–359 (IHVVMTGGYATIAGSLLGAYISF). Over 360–365 (GIDAAS) the chain is Cytoplasmic. A helical transmembrane segment spans residues 366-385 (LIAASVMAAPCALALSKLVY). Residues 386 to 422 (PEVEESKFKREEGVKLTYGDAQNLLEAASSGAAMSVR) are Extracellular-facing. Residues 423 to 445 (VVTNIAANLIAFLAVLAFINAAL) form a helical membrane-spanning segment. Topologically, residues 446–456 (SWLGDMVDVQG) are cytoplasmic. Residues 457–478 (LSFQLICSYVLRPVAFLMGVAW) form a helical membrane-spanning segment. Residues 479–533 (EDCPVVAELLGMKLFLNEFVAYQELSGYKQRRLAGAEEWVGSRKQWISVRAEILT) lie on the Extracellular side of the membrane. The chain crosses the membrane as a helical span at residues 534 to 557 (TYALCGFANFSSIGIMLGGLTSMV). The Cytoplasmic portion of the chain corresponds to 558–568 (PQRKGDFSQIV). A helical transmembrane segment spans residues 569–591 (LRALCTGACVSLVNACVAGILYV). Topologically, residues 592-647 (PRGAEVDCVSFLNTTLSSSSFEVYQCCRQFFQSTSLEFSPEALDNCCRFYNHTICV) are extracellular. N-linked (GlcNAc...) asparagine glycans are attached at residues asparagine 604 and asparagine 642.

Belongs to the concentrative nucleoside transporter (CNT) (TC 2.A.41) family. Post-translationally, N-glycosylated. N-glycosylation is required for localization to the plasma membrane and the transporter activity.

It is found in the cell membrane. Its subcellular location is the apical cell membrane. The catalysed reaction is uridine(out) + Na(+)(out) = uridine(in) + Na(+)(in). The enzyme catalyses thymidine(out) + Na(+)(out) = thymidine(in) + Na(+)(in). It carries out the reaction cytidine(out) + Na(+)(out) = cytidine(in) + Na(+)(in). It catalyses the reaction adenosine(out) + Na(+)(out) = adenosine(in) + Na(+)(in). Due to its high apparent affinity but slow transport, adenosine could act as a negative regulator of pyrimidine transport under some conditions. Its function is as follows. Sodium and pyrimidine nucleoside symporter of the plasma membrane that imports uridine, thymidine and cytidine into cells by coupling their transport to the transmembrane sodium electrochemical gradient. Also transports adenosine, an atypical substrate transported with high apparent affinity, but low maximum velocity. Therefore, exhibits the transport characteristics of the nucleoside transport system cit or N2 subtype (N2/cit). Involved in renal nucleoside (re)absorption. This Sus scrofa (Pig) protein is Sodium/nucleoside cotransporter 1 (SLC28A1).